The sequence spans 124 residues: MLNTLVVFVGAGLGGALRHGVNLAAARLGGSFPAGTMIINIAGSLAMGLLTGWFAVRGGMPQAWRLFLTTGILGGFTTFSTFSLEAFLLMERGAFAAAALYVLGSVAAGIAGVGASLAVIRQFG.

Transmembrane regions (helical) follow at residues 5-25 (LVVFVGAGLGGALRHGVNLAA), 36-56 (TMIINIAGSLAMGLLTGWFAV), 70-90 (TGILGGFTTFSTFSLEAFLLM), and 100-120 (LYVLGSVAAGIAGVGASLAVI). Residues glycine 74 and threonine 77 each contribute to the Na(+) site.

It belongs to the fluoride channel Fluc/FEX (TC 1.A.43) family.

It is found in the cell inner membrane. It carries out the reaction fluoride(in) = fluoride(out). With respect to regulation, na(+) is not transported, but it plays an essential structural role and its presence is essential for fluoride channel function. Its function is as follows. Fluoride-specific ion channel. Important for reducing fluoride concentration in the cell, thus reducing its toxicity. The chain is Fluoride-specific ion channel FluC from Methylobacterium nodulans (strain LMG 21967 / CNCM I-2342 / ORS 2060).